Reading from the N-terminus, the 177-residue chain is O-acetyl-ADP-ribose deacetylase (177 aa).

Residues 1 to 175 (MKSRIHVQHG…LYERLLTQQG (175 aa)) form the Macro domain. Substrate is bound by residues 11-12 (DI), N25, 33-35 (GVD), and 122-126 (STGAY). Residue D35 is the Proton acceptor of the active site.

The protein belongs to the MacroD-type family. YmdB subfamily. In terms of assembly, homodimer. Interacts with RNase III.

The catalysed reaction is 3''-O-acetyl-ADP-D-ribose + H2O = ADP-D-ribose + acetate + H(+). It carries out the reaction 2''-O-acetyl-ADP-D-ribose + H2O = ADP-D-ribose + acetate + H(+). Functionally, deacetylates O-acetyl-ADP ribose to yield ADP-ribose and free acetate. Down-regulates ribonuclease 3 (RNase III) activity. Acts by interacting directly with the region of the ribonuclease that is required for dimerization/activation. In Citrobacter koseri (strain ATCC BAA-895 / CDC 4225-83 / SGSC4696), this protein is O-acetyl-ADP-ribose deacetylase.